The following is a 460-amino-acid chain: Receptor-like cytosolic serine/threonine-protein kinase RBK2 (460 aa).

Residues 1–67 (MNSASAHDLR…DADTDVQCKN (67 aa)) form a disordered region. Residues 7 to 23 (HDLRLLEVDKEKQDPKS) show a composition bias toward basic and acidic residues. The Protein kinase domain maps to 143–415 (FSPENIIGRG…VELLLGHEDV (273 aa)). Residues 149–157 (IGRGGYADV) and lysine 171 contribute to the ATP site. The active-site Proton acceptor is aspartate 267. Phosphothreonine is present on threonine 307. Tyrosine 315 bears the Phosphotyrosine mark.

This sequence belongs to the protein kinase superfamily. Ser/Thr protein kinase family. Interacts with ARAC5 and ARAC10.

It is found in the cytoplasm. The catalysed reaction is L-seryl-[protein] + ATP = O-phospho-L-seryl-[protein] + ADP + H(+). It catalyses the reaction L-threonyl-[protein] + ATP = O-phospho-L-threonyl-[protein] + ADP + H(+). This chain is Receptor-like cytosolic serine/threonine-protein kinase RBK2 (RBK2), found in Arabidopsis thaliana (Mouse-ear cress).